Consider the following 1849-residue polypeptide: NADH-ubiquinone oxidoreductase chain 5 (1849 aa).

41 consecutive transmembrane segments (helical) span residues Y76–Y93, L98–Y120, Y190–W212, L222–Y244, H279–S301, L316–Y338, L358–V380, V390–I412, I419–L441, L483–V505, L510–V532, I536–I558, L565–I587, I621–V640, W683–F705, L718–L740, I745–L767, P797–V819, I868–L890, L905–L927, L966–E988, P1008–L1030, L1073–F1095, L1105–L1127, T1172–I1194, V1219–H1241, G1248–Y1270, I1296–L1318, F1330–Y1352, M1357–I1379, L1418–T1440, V1444–L1466, A1478–L1500, V1504–T1526, K1533–F1555, L1559–H1581, I1602–A1624, V1639–I1661, L1719–G1741, V1773–N1795, and I1802–L1824.

Belongs to the complex I subunit 5 family.

It is found in the hydrogenosome membrane. The catalysed reaction is a ubiquinone + NADH + 5 H(+)(in) = a ubiquinol + NAD(+) + 4 H(+)(out). This chain is NADH-ubiquinone oxidoreductase chain 5 (nad5), found in Nyctotherus ovalis.